The chain runs to 347 residues: Protein RecA (347 aa).

67–74 (GPESSGKT) contributes to the ATP binding site.

This sequence belongs to the RecA family.

It localises to the cytoplasm. Can catalyze the hydrolysis of ATP in the presence of single-stranded DNA, the ATP-dependent uptake of single-stranded DNA by duplex DNA, and the ATP-dependent hybridization of homologous single-stranded DNAs. It interacts with LexA causing its activation and leading to its autocatalytic cleavage. This chain is Protein RecA, found in Helicobacter pylori (strain G27).